Consider the following 103-residue polypeptide: Nucleoid-associated protein Adeh_3636 (103 aa).

The protein belongs to the YbaB/EbfC family. As to quaternary structure, homodimer.

It is found in the cytoplasm. The protein localises to the nucleoid. In terms of biological role, binds to DNA and alters its conformation. May be involved in regulation of gene expression, nucleoid organization and DNA protection. In Anaeromyxobacter dehalogenans (strain 2CP-C), this protein is Nucleoid-associated protein Adeh_3636.